The sequence spans 388 residues: Chorismate synthase (388 aa).

NADP(+) is bound by residues arginine 39 and arginine 45. Residues 132–134 (RSS), 251–252 (NA), glycine 296, 311–315 (KPIPT), and arginine 337 contribute to the FMN site.

This sequence belongs to the chorismate synthase family. In terms of assembly, homotetramer. It depends on FMNH2 as a cofactor.

The enzyme catalyses 5-O-(1-carboxyvinyl)-3-phosphoshikimate = chorismate + phosphate. The protein operates within metabolic intermediate biosynthesis; chorismate biosynthesis; chorismate from D-erythrose 4-phosphate and phosphoenolpyruvate: step 7/7. Its function is as follows. Catalyzes the anti-1,4-elimination of the C-3 phosphate and the C-6 proR hydrogen from 5-enolpyruvylshikimate-3-phosphate (EPSP) to yield chorismate, which is the branch point compound that serves as the starting substrate for the three terminal pathways of aromatic amino acid biosynthesis. This reaction introduces a second double bond into the aromatic ring system. The sequence is that of Chorismate synthase from Staphylococcus epidermidis (strain ATCC 35984 / DSM 28319 / BCRC 17069 / CCUG 31568 / BM 3577 / RP62A).